A 201-amino-acid chain; its full sequence is Holliday junction branch migration complex subunit RuvA (201 aa).

The domain I stretch occupies residues 1–63 (MIAYIKGTLN…EDAQILFGFQ (63 aa)). The segment at 64-142 (NRDEKYLFTK…SVFSITDEQQ (79 aa)) is domain II. Residues 143-149 (KSSVSNV) form a flexible linker region. A domain III region spans residues 150 to 201 (NNNEVYSEAMEALKALGYTDKEVKQVLPHLKKDNDALSVDEAIRKALALLAK).

This sequence belongs to the RuvA family. Homotetramer. Forms an RuvA(8)-RuvB(12)-Holliday junction (HJ) complex. HJ DNA is sandwiched between 2 RuvA tetramers; dsDNA enters through RuvA and exits via RuvB. An RuvB hexamer assembles on each DNA strand where it exits the tetramer. Each RuvB hexamer is contacted by two RuvA subunits (via domain III) on 2 adjacent RuvB subunits; this complex drives branch migration. In the full resolvosome a probable DNA-RuvA(4)-RuvB(12)-RuvC(2) complex forms which resolves the HJ.

It is found in the cytoplasm. Its function is as follows. The RuvA-RuvB-RuvC complex processes Holliday junction (HJ) DNA during genetic recombination and DNA repair, while the RuvA-RuvB complex plays an important role in the rescue of blocked DNA replication forks via replication fork reversal (RFR). RuvA specifically binds to HJ cruciform DNA, conferring on it an open structure. The RuvB hexamer acts as an ATP-dependent pump, pulling dsDNA into and through the RuvAB complex. HJ branch migration allows RuvC to scan DNA until it finds its consensus sequence, where it cleaves and resolves the cruciform DNA. This chain is Holliday junction branch migration complex subunit RuvA, found in Oceanobacillus iheyensis (strain DSM 14371 / CIP 107618 / JCM 11309 / KCTC 3954 / HTE831).